Reading from the N-terminus, the 73-residue chain is UPF0235 protein LBL_1291 (73 aa).

It belongs to the UPF0235 family.

The chain is UPF0235 protein LBL_1291 from Leptospira borgpetersenii serovar Hardjo-bovis (strain L550).